A 162-amino-acid chain; its full sequence is RNA pyrophosphohydrolase (162 aa).

Residues 7–149 enclose the Nudix hydrolase domain; it reads KYRPCVGIML…KKEVYKTVIE (143 aa). Residues 40–61 carry the Nudix box motif; it reads GGVDDGEELEQAALRELLEEVG.

It belongs to the Nudix hydrolase family. RppH subfamily. A divalent metal cation serves as cofactor.

Accelerates the degradation of transcripts by removing pyrophosphate from the 5'-end of triphosphorylated RNA, leading to a more labile monophosphorylated state that can stimulate subsequent ribonuclease cleavage. The protein is RNA pyrophosphohydrolase of Wolbachia pipientis wMel.